A 180-amino-acid chain; its full sequence is DNA-directed RNA polymerase subunit Rpo7 (180 aa).

Residues 82–165 (QEVVEGEVLQ…RLPRIALTMR (84 aa)) form the S1 motif domain.

The protein belongs to the eukaryotic RPB7/RPC8 RNA polymerase subunit family. In terms of assembly, part of the 13-subunit RNA polymerase complex. Forms a stalk with Rpo4 that extends from the main structure.

It is found in the cytoplasm. It catalyses the reaction RNA(n) + a ribonucleoside 5'-triphosphate = RNA(n+1) + diphosphate. Functionally, DNA-dependent RNA polymerase (RNAP) catalyzes the transcription of DNA into RNA using the four ribonucleoside triphosphates as substrates. This chain is DNA-directed RNA polymerase subunit Rpo7, found in Saccharolobus solfataricus (strain ATCC 35092 / DSM 1617 / JCM 11322 / P2) (Sulfolobus solfataricus).